A 491-amino-acid polypeptide reads, in one-letter code: Probable protein phosphatase 2C 52 (491 aa).

A compositionally biased stretch (basic and acidic residues) spans 1–11 (MVYDGAVKDQE). Positions 1–211 (MVYDGAVKDQ…REREKERERV (211 aa)) are disordered. A compositionally biased stretch (low complexity) spans 12–54 (SSANPASASAALSEASAAASEVTAAAAAGAGAGAAEEGAAVSG). The segment covering 66-78 (GVRHPLKHRRFRA) has biased composition (basic residues). Residues 95–105 (VADEEASEVEQ) show a composition bias toward acidic residues. Positions 187–211 (VEEKKHKDQENKHKEREREKERERV) are enriched in basic and acidic residues. The 247-residue stretch at 229-475 (SCGYSSFRGK…DNITCIVVKF (247 aa)) folds into the PPM-type phosphatase domain. Mn(2+) is bound by residues Asp265, Gly266, Asp427, and Asp466.

The protein belongs to the PP2C family. Mg(2+) is required as a cofactor. Mn(2+) serves as cofactor.

It catalyses the reaction O-phospho-L-seryl-[protein] + H2O = L-seryl-[protein] + phosphate. It carries out the reaction O-phospho-L-threonyl-[protein] + H2O = L-threonyl-[protein] + phosphate. This chain is Probable protein phosphatase 2C 52, found in Oryza sativa subsp. japonica (Rice).